Consider the following 418-residue polypeptide: Endoglucanase EG-II (418 aa).

The N-terminal stretch at 1–21 is a signal peptide; sequence MNKSVAPLLLAASILYGGAVA. Gln22 carries the pyrrolidone carboxylic acid modification. One can recognise a CBM1 domain in the interval 22–57; the sequence is QQTVWGQCGGIGWSGPTNCAPGSACSTLNPYYAQCI. The interval 58 to 91 is linker; that stretch reads PGATTITTSTRPPSGPTTTTRATSTSSSTPPTSS. A disordered region spans residues 63-91; that stretch reads ITTSTRPPSGPTTTTRATSTSSSTPPTSS. A catalytic region spans residues 92–418; the sequence is GVRFAGVNIA…SLVSSCLARK (327 aa). A disulfide bridge connects residues Cys107 and Cys113. The N-linked (GlcNAc) asparagine glycan is linked to Asn124. Cys183 and Cys190 are joined by a disulfide. The Proton donor/acceptor role is filled by Glu239. 2 disulfide bridges follow: Cys323–Cys359 and Cys364–Cys414. Catalysis depends on Glu350, which acts as the Nucleophile.

The protein belongs to the glycosyl hydrolase 5 (cellulase A) family.

It localises to the secreted. It carries out the reaction Endohydrolysis of (1-&gt;4)-beta-D-glucosidic linkages in cellulose, lichenin and cereal beta-D-glucans.. Its function is as follows. Endoglucanase (EG) that cleaves the internal beta-1,4-glucosidic bonds in cellulose. The degradation of cellulose involves an interplay between different cellulolytic enzymes. Hydrolysis starts with EGs, which cut internal glycosidic linkages to reduce the polymerization degree of the substrate and creates new chain ends for exocellobiohydrolases (CBHs). The CBH release the disaccharide cellobiose from the non-reducing end of the cellulose polymer chain. Finally, beta-1,4-glucosidases hydrolyze the cellobiose and other short cello-oligosaccharides into glucose units. In Hypocrea jecorina (Trichoderma reesei), this protein is Endoglucanase EG-II (egl2).